Reading from the N-terminus, the 480-residue chain is Zinc finger protein ztf-6 (480 aa).

Disordered stretches follow at residues 92–160 (CHDS…TMMV), 174–198 (GTNG…EEHD), 282–307 (LDAG…PTAS), and 328–351 (DANT…MKVP). 4 stretches are compositionally biased toward low complexity: residues 95–105 (SATSTTTTVSH), 131–145 (SSIE…SSSV), 174–187 (GTNG…TSSS), and 286–296 (SSENDGSTSSS). C2H2-type zinc fingers lie at residues 359–383 (YICP…FVTH) and 388–410 (FNCD…QKIH). The C2H2-type 3; degenerate zinc-finger motif lies at 416–441 (YQCRGCGTNYTTQNGLRLHRQRNPAC). Residues 461 to 480 (ALSGPLSKNSSPTKQMVSAP) are disordered.

In terms of biological role, probable transcription factor, involved in regulation of dopamine neuron lineage specification. May play a role in maintaining robustness of the Wnt/beta-catenin asymmetry pathway. The sequence is that of Zinc finger protein ztf-6 from Caenorhabditis elegans.